The primary structure comprises 152 residues: Transcriptional regulator MraZ (152 aa).

2 SpoVT-AbrB domains span residues 5–52 (ASAI…PIHE) and 81–124 (AHEV…DEQA).

Belongs to the MraZ family. Forms oligomers.

Its subcellular location is the cytoplasm. The protein resides in the nucleoid. The sequence is that of Transcriptional regulator MraZ from Shewanella oneidensis (strain ATCC 700550 / JCM 31522 / CIP 106686 / LMG 19005 / NCIMB 14063 / MR-1).